Reading from the N-terminus, the 401-residue chain is MTLPKIKHVRAWFIGGATAEQGAGGGDYHDQGANHWIDDHIATPMSKYKQYEQSRQSFGINVLGTLIVEVEADNGQTGFAVSTAGEMGCFIVEKHLNRFIEGKCVSDIKLIHDQMLNATLYYAGSGGLVMNTISCVDLALWDLFGKVVGLPVYKLLGGAVRDEIQFYATGARPDLAQEMGFIGGKMPTHWGPHDGDAGIRKDVAMVADMREKCGPDFWLMLDCWMSQDVNYATKLAHACAPYNLKWIEECLPPQQYEGYRELKRQAPAGMMVTSGEHHGTLQSFRTLSETGIDIMQPDVGWCGGLTTLVEIAAIAKARGQLVVPHGSSVYSHHAVITFTNTPFSEFLMTSPDCATLRPQFDPILLGEPVPERGRIHKSVLDKPGFGVELNRDCNLKRPYQH.

The substrate site is built by His-29 and Arg-55. Mg(2+) contacts are provided by Asp-222, Glu-248, and Glu-276. The active-site Proton acceptor is the His-325. Position 345 (Glu-345) interacts with substrate.

It belongs to the mandelate racemase/muconate lactonizing enzyme family. RhamD subfamily. As to quaternary structure, homooctamer; tetramer of dimers. Mg(2+) is required as a cofactor.

It carries out the reaction L-rhamnonate = 2-dehydro-3-deoxy-L-rhamnonate + H2O. Its function is as follows. Catalyzes the dehydration of L-rhamnonate to 2-keto-3-deoxy-L-rhamnonate (KDR). In Klebsiella pneumoniae subsp. pneumoniae (strain ATCC 700721 / MGH 78578), this protein is L-rhamnonate dehydratase.